Here is a 151-residue protein sequence, read N- to C-terminus: Large ribosomal subunit protein bL9 (151 aa).

Belongs to the bacterial ribosomal protein bL9 family.

Its function is as follows. Binds to the 23S rRNA. The sequence is that of Large ribosomal subunit protein bL9 from Mycoplasmopsis agalactiae (strain NCTC 10123 / CIP 59.7 / PG2) (Mycoplasma agalactiae).